The following is a 293-amino-acid chain: Ribosomal protein L11 methyltransferase (293 aa).

Residues threonine 145, glycine 166, aspartate 188, and asparagine 230 each contribute to the S-adenosyl-L-methionine site.

Belongs to the methyltransferase superfamily. PrmA family.

The protein localises to the cytoplasm. The catalysed reaction is L-lysyl-[protein] + 3 S-adenosyl-L-methionine = N(6),N(6),N(6)-trimethyl-L-lysyl-[protein] + 3 S-adenosyl-L-homocysteine + 3 H(+). Functionally, methylates ribosomal protein L11. This is Ribosomal protein L11 methyltransferase from Escherichia coli (strain 55989 / EAEC).